The sequence spans 590 residues: Hyaluronan synthase 1 (590 aa).

Residues 1-31 (MKDKAAATMEIPEDPGIPKNLERKRPIVWRM) are Cytoplasmic-facing. A helical membrane pass occupies residues 32–52 (IYYSFAVLLLAAFTAAYVTEF). The Extracellular segment spans residues 53 to 60 (QILTHEDV). A helical transmembrane segment spans residues 61–81 (LFSLGLYGLVMFLHLMMQSLF). At 82–401 (AYLEIRRINK…YNAQWWYKHH (320 aa)) the chain is on the cytoplasmic side. A helical membrane pass occupies residues 402–422 (IWMTYESVVHFIFPFFITATV). The Extracellular portion of the chain corresponds to 423-425 (IRL). Residues 426 to 446 (LYASTIWNVVWLLLCIQIMSV) form a helical membrane-spanning segment. The Cytoplasmic portion of the chain corresponds to 447–456 (LKSLYACWLR). A helical membrane pass occupies residues 457–477 (GNPIMLLMSLYSMLYMTGLLP). Over 478-505 (SKYFAMLTINKSGWGTSGRKKIVGNYMP) the chain is Extracellular. The chain crosses the membrane as a helical span at residues 506–526 (VLPLSIWMAVLCGGVGYSIYM). Residues 527-543 (DCHQDWSTPEKQKELYH) lie on the Cytoplasmic side of the membrane. A helical membrane pass occupies residues 544–564 (LLYGCISYTLYWVLMALMYWV). At 565–588 (WVKRCCRKRSQTVTLVHDIPERLV) the chain is on the extracellular side.

Belongs to the NodC/HAS family. Mg(2+) is required as a cofactor.

The protein resides in the membrane. It carries out the reaction [hyaluronan](n) + UDP-N-acetyl-alpha-D-glucosamine = N-acetyl-beta-D-glucosaminyl-(1-&gt;4)-[hyaluronan](n) + UDP + H(+). The enzyme catalyses N-acetyl-beta-D-glucosaminyl-(1-&gt;4)-[hyaluronan](n) + UDP-alpha-D-glucuronate = [hyaluronan](n+1) + UDP + H(+). Its pathway is glycan biosynthesis; hyaluronan biosynthesis. Catalyzes the addition of GlcNAc or GlcUA monosaccharides to the nascent hyaluronan polymer. Therefore, it is essential to hyaluronan synthesis a major component of most extracellular matrices that has a structural role in tissues architectures and regulates cell adhesion, migration and differentiation. Also able to catalyze the synthesis of chito-oligosaccharide depending on the substrate. The polypeptide is Hyaluronan synthase 1 (has1) (Xenopus tropicalis (Western clawed frog)).